The primary structure comprises 187 residues: ATP synthase subunit b 2 (187 aa).

Residues 1-12 (MAQERAEHESAD) are compositionally biased toward basic and acidic residues. The interval 1 to 31 (MAQERAEHESADQHTTSTGVPHEGQGEPFPP) is disordered. Residues 40–60 (LLIWLAISFLLLYALMSKLVL) traverse the membrane as a helical segment.

Belongs to the ATPase B chain family. F-type ATPases have 2 components, F(1) - the catalytic core - and F(0) - the membrane proton channel. F(1) has five subunits: alpha(3), beta(3), gamma(1), delta(1), epsilon(1). F(0) has three main subunits: a(1), b(2) and c(10-14). The alpha and beta chains form an alternating ring which encloses part of the gamma chain. F(1) is attached to F(0) by a central stalk formed by the gamma and epsilon chains, while a peripheral stalk is formed by the delta and b chains.

It localises to the cell inner membrane. Its function is as follows. F(1)F(0) ATP synthase produces ATP from ADP in the presence of a proton or sodium gradient. F-type ATPases consist of two structural domains, F(1) containing the extramembraneous catalytic core and F(0) containing the membrane proton channel, linked together by a central stalk and a peripheral stalk. During catalysis, ATP synthesis in the catalytic domain of F(1) is coupled via a rotary mechanism of the central stalk subunits to proton translocation. Functionally, component of the F(0) channel, it forms part of the peripheral stalk, linking F(1) to F(0). The b'-subunit is a diverged and duplicated form of b found in plants and photosynthetic bacteria. This chain is ATP synthase subunit b 2 (atpF2), found in Beijerinckia indica subsp. indica (strain ATCC 9039 / DSM 1715 / NCIMB 8712).